Consider the following 404-residue polypeptide: L-cysteine:1D-myo-inositol 2-amino-2-deoxy-alpha-D-glucopyranoside ligase (404 aa).

Residue Cys47 coordinates Zn(2+). Residues Cys47 to Thr50, Thr62, and Asn85 to Thr87 each bind L-cysteinyl-5'-AMP. The short motif at Ile49 to His59 is the 'HIGH' region element. Residues Glu188–Pro193 carry the 'ERGGDP' region motif. Trp228 provides a ligand contact to L-cysteinyl-5'-AMP. Residue Cys232 coordinates Zn(2+). Position 250 to 252 (Gly250 to Asp252) interacts with L-cysteinyl-5'-AMP. Zn(2+) is bound at residue His257. L-cysteinyl-5'-AMP is bound at residue Ile284. Positions Lys290–Ser294 match the 'KMSKS' region motif.

This sequence belongs to the class-I aminoacyl-tRNA synthetase family. MshC subfamily. As to quaternary structure, monomer. Requires Zn(2+) as cofactor.

It carries out the reaction 1D-myo-inositol 2-amino-2-deoxy-alpha-D-glucopyranoside + L-cysteine + ATP = 1D-myo-inositol 2-(L-cysteinylamino)-2-deoxy-alpha-D-glucopyranoside + AMP + diphosphate + H(+). In terms of biological role, catalyzes the ATP-dependent condensation of GlcN-Ins and L-cysteine to form L-Cys-GlcN-Ins. This chain is L-cysteine:1D-myo-inositol 2-amino-2-deoxy-alpha-D-glucopyranoside ligase, found in Corynebacterium striatum.